Reading from the N-terminus, the 206-residue chain is MLPILLSFEGKKVAVFGCGSVGKRRAKKILKSGGIVDIYSKEFDEEIKKLKESNKNLNLIEIDINQLSDEELKNIIMKYDFIVTAINDEINKRIVKLAKELNKFVNSSTKTEGVNFIIPAYTEVDEVIFSIYTKGKSPLIAKHIRIFVENYLKSTDINMIAYIREFLKETIPKQKDREKILKKIFENEKFREELKKLIEKWENGNH.

Residues 20–21 and 41–46 contribute to the NAD(+) site; these read SV and KEFDEE.

The protein belongs to the precorrin-2 dehydrogenase / sirohydrochlorin ferrochelatase family. Homodimer.

The catalysed reaction is precorrin-2 + NAD(+) = sirohydrochlorin + NADH + 2 H(+). It functions in the pathway porphyrin-containing compound metabolism; siroheme biosynthesis; sirohydrochlorin from precorrin-2: step 1/1. In terms of biological role, involved in the archaeal biosynthesis of heme. Catalyzes the oxiation of precorrin-2 into sirohydroclorin. The protein is Putative precorrin-2 dehydrogenase of Methanocaldococcus jannaschii (strain ATCC 43067 / DSM 2661 / JAL-1 / JCM 10045 / NBRC 100440) (Methanococcus jannaschii).